Reading from the N-terminus, the 258-residue chain is Phosphatidylglycerol--prolipoprotein diacylglyceryl transferase (258 aa).

7 helical membrane-spanning segments follow: residues 9-29 (ILIQLGPIAVHWYGALFATGF), 53-73 (LLTYIFIGTVVGARLAHTLIY), 90-110 (EGGLASHGGGIGVLLAIWLFV), 117-139 (KFLWLADRLAIPTALTGCFIRLG), 169-189 (PVQLYEAASYFAIFVLLLMLF), 198-218 (GFLFGLFLTLVFAARFIIEYF), and 230-250 (LISVGQWLSVPFVLAGIVLML). A 1,2-diacyl-sn-glycero-3-phospho-(1'-sn-glycerol) is bound at residue Arg137.

Belongs to the Lgt family.

The protein resides in the cell inner membrane. It catalyses the reaction L-cysteinyl-[prolipoprotein] + a 1,2-diacyl-sn-glycero-3-phospho-(1'-sn-glycerol) = an S-1,2-diacyl-sn-glyceryl-L-cysteinyl-[prolipoprotein] + sn-glycerol 1-phosphate + H(+). Its pathway is protein modification; lipoprotein biosynthesis (diacylglyceryl transfer). Catalyzes the transfer of the diacylglyceryl group from phosphatidylglycerol to the sulfhydryl group of the N-terminal cysteine of a prolipoprotein, the first step in the formation of mature lipoproteins. The protein is Phosphatidylglycerol--prolipoprotein diacylglyceryl transferase of Tolumonas auensis (strain DSM 9187 / NBRC 110442 / TA 4).